The following is a 484-amino-acid chain: UDP-N-acetylmuramate--L-alanine ligase (484 aa).

122-128 (GTHGKTT) lines the ATP pocket.

This sequence belongs to the MurCDEF family.

It is found in the cytoplasm. The enzyme catalyses UDP-N-acetyl-alpha-D-muramate + L-alanine + ATP = UDP-N-acetyl-alpha-D-muramoyl-L-alanine + ADP + phosphate + H(+). It functions in the pathway cell wall biogenesis; peptidoglycan biosynthesis. In terms of biological role, cell wall formation. This chain is UDP-N-acetylmuramate--L-alanine ligase, found in Mycobacterium sp. (strain JLS).